Here is a 378-residue protein sequence, read N- to C-terminus: Quinolinate synthase (378 aa).

Iminosuccinate-binding residues include His-59 and Ser-80. Residue Cys-125 participates in [4Fe-4S] cluster binding. Iminosuccinate-binding positions include Tyr-151–Asn-153 and Ser-168. Cys-212 provides a ligand contact to [4Fe-4S] cluster. Iminosuccinate-binding positions include His-238–Glu-240 and Thr-255. Cys-309 contacts [4Fe-4S] cluster.

Belongs to the quinolinate synthase family. Type 1 subfamily. It depends on [4Fe-4S] cluster as a cofactor.

Its subcellular location is the cytoplasm. The enzyme catalyses iminosuccinate + dihydroxyacetone phosphate = quinolinate + phosphate + 2 H2O + H(+). Its pathway is cofactor biosynthesis; NAD(+) biosynthesis; quinolinate from iminoaspartate: step 1/1. Functionally, catalyzes the condensation of iminoaspartate with dihydroxyacetone phosphate to form quinolinate. This is Quinolinate synthase from Burkholderia lata (strain ATCC 17760 / DSM 23089 / LMG 22485 / NCIMB 9086 / R18194 / 383).